A 377-amino-acid polypeptide reads, in one-letter code: Chaperone protein DnaJ (377 aa).

Residues 5 to 70 form the J domain; the sequence is DYYQVLGVSR…KKRSAYDQLG (66 aa). The CR-type zinc-finger motif lies at 138–216; that stretch reads GVTKIISFKT…CYGEGRYINT (79 aa). Zn(2+)-binding residues include C151, C154, C168, C171, C190, C193, C204, and C207. 4 CXXCXGXG motif repeats span residues 151–158, 168–175, 190–197, and 204–211; these read CDACAGKG, CPTCRGSG, CQTCRGAG, and CTKCYGEG.

Belongs to the DnaJ family. Homodimer. Zn(2+) is required as a cofactor.

It is found in the cytoplasm. Functionally, participates actively in the response to hyperosmotic and heat shock by preventing the aggregation of stress-denatured proteins and by disaggregating proteins, also in an autonomous, DnaK-independent fashion. Unfolded proteins bind initially to DnaJ; upon interaction with the DnaJ-bound protein, DnaK hydrolyzes its bound ATP, resulting in the formation of a stable complex. GrpE releases ADP from DnaK; ATP binding to DnaK triggers the release of the substrate protein, thus completing the reaction cycle. Several rounds of ATP-dependent interactions between DnaJ, DnaK and GrpE are required for fully efficient folding. Also involved, together with DnaK and GrpE, in the DNA replication of plasmids through activation of initiation proteins. In Orientia tsutsugamushi (strain Boryong) (Rickettsia tsutsugamushi), this protein is Chaperone protein DnaJ.